Reading from the N-terminus, the 281-residue chain is NADPH-dependent 7-cyano-7-deazaguanine reductase (281 aa).

A substrate-binding site is contributed by 88 to 90; sequence IES. 90-91 contacts NADPH; that stretch reads SK. The active-site Thioimide intermediate is the Cys189. The active-site Proton donor is Asp196. 228–229 serves as a coordination point for substrate; it reads HE. 257–258 is an NADPH binding site; it reads RG.

It belongs to the GTP cyclohydrolase I family. QueF type 2 subfamily. Homodimer.

Its subcellular location is the cytoplasm. The enzyme catalyses 7-aminomethyl-7-carbaguanine + 2 NADP(+) = 7-cyano-7-deazaguanine + 2 NADPH + 3 H(+). It functions in the pathway tRNA modification; tRNA-queuosine biosynthesis. Catalyzes the NADPH-dependent reduction of 7-cyano-7-deazaguanine (preQ0) to 7-aminomethyl-7-deazaguanine (preQ1). The chain is NADPH-dependent 7-cyano-7-deazaguanine reductase from Erwinia tasmaniensis (strain DSM 17950 / CFBP 7177 / CIP 109463 / NCPPB 4357 / Et1/99).